The following is a 144-amino-acid chain: Large-conductance mechanosensitive channel (144 aa).

The next 2 membrane-spanning stretches (helical) occupy residues 16–36 (VIDL…VDSV) and 86–106 (GNFL…FMMV).

The protein belongs to the MscL family. Homopentamer.

Its subcellular location is the cell inner membrane. In terms of biological role, channel that opens in response to stretch forces in the membrane lipid bilayer. May participate in the regulation of osmotic pressure changes within the cell. This is Large-conductance mechanosensitive channel from Cupriavidus metallidurans (strain ATCC 43123 / DSM 2839 / NBRC 102507 / CH34) (Ralstonia metallidurans).